The sequence spans 80 residues: Putative membrane protein insertion efficiency factor (80 aa).

Belongs to the UPF0161 family.

The protein localises to the cell inner membrane. In terms of biological role, could be involved in insertion of integral membrane proteins into the membrane. The polypeptide is Putative membrane protein insertion efficiency factor (Picosynechococcus sp. (strain ATCC 27264 / PCC 7002 / PR-6) (Agmenellum quadruplicatum)).